A 186-amino-acid polypeptide reads, in one-letter code: Elongation factor P (186 aa).

The protein belongs to the elongation factor P family.

Its subcellular location is the cytoplasm. The protein operates within protein biosynthesis; polypeptide chain elongation. In terms of biological role, involved in peptide bond synthesis. Stimulates efficient translation and peptide-bond synthesis on native or reconstituted 70S ribosomes in vitro. Probably functions indirectly by altering the affinity of the ribosome for aminoacyl-tRNA, thus increasing their reactivity as acceptors for peptidyl transferase. The polypeptide is Elongation factor P (Brucella ovis (strain ATCC 25840 / 63/290 / NCTC 10512)).